The primary structure comprises 742 residues: Phosphoribosylformylglycinamidine synthase subunit PurL (742 aa).

Residue H54 is part of the active site. Y57 and K96 together coordinate ATP. Position 98 (E98) interacts with Mg(2+). Substrate is bound by residues 99 to 102 (SHNH) and R121. H100 functions as the Proton acceptor in the catalytic mechanism. D122 is a Mg(2+) binding site. The substrate site is built by G225 and Q245. Residue D273 participates in Mg(2+) binding. Residue 317–319 (ESQ) coordinates substrate. G537 is an ATP binding site. Position 538 (N538) interacts with Mg(2+). Residue S540 coordinates substrate.

This sequence belongs to the FGAMS family. As to quaternary structure, monomer. Part of the FGAM synthase complex composed of 1 PurL, 1 PurQ and 2 PurS subunits.

The protein resides in the cytoplasm. The enzyme catalyses N(2)-formyl-N(1)-(5-phospho-beta-D-ribosyl)glycinamide + L-glutamine + ATP + H2O = 2-formamido-N(1)-(5-O-phospho-beta-D-ribosyl)acetamidine + L-glutamate + ADP + phosphate + H(+). The catalysed reaction is L-glutamine + H2O = L-glutamate + NH4(+). It functions in the pathway purine metabolism; IMP biosynthesis via de novo pathway; 5-amino-1-(5-phospho-D-ribosyl)imidazole from N(2)-formyl-N(1)-(5-phospho-D-ribosyl)glycinamide: step 1/2. In terms of biological role, part of the phosphoribosylformylglycinamidine synthase complex involved in the purines biosynthetic pathway. Catalyzes the ATP-dependent conversion of formylglycinamide ribonucleotide (FGAR) and glutamine to yield formylglycinamidine ribonucleotide (FGAM) and glutamate. The FGAM synthase complex is composed of three subunits. PurQ produces an ammonia molecule by converting glutamine to glutamate. PurL transfers the ammonia molecule to FGAR to form FGAM in an ATP-dependent manner. PurS interacts with PurQ and PurL and is thought to assist in the transfer of the ammonia molecule from PurQ to PurL. The protein is Phosphoribosylformylglycinamidine synthase subunit PurL of Bacillus subtilis (strain 168).